The chain runs to 321 residues: MSDALLNAGRQTLMLELQEASRLPERLGDDFVRAANIIIHCEGKVIVSGIGKSGHIGKKIAATLASTGTPAFFVHPAEALHGDLGMIESRDVMLFISYSGGAKELDLIIPRLEDKSVALLAMTGKLHSPLGRAAKAVLDISVEREACPMHLAPTSSTVNTLMMGDALAMAVMQARGFNEEDFARSHPAGALGARLLNNVHHLMRQGDAIPQVMLATSVMDAMLELSRTGLGLVAVCDEQHVVKGVFTDGDLRRWLVGGGALTTPVSEAMTPNGITLQAQSRAIDAKELLMKRKITAAPVVDENGKLTGAINLQDFYQAGII.

An SIS domain is found at 34-177 (AANIIIHCEG…AMAVMQARGF (144 aa)). An ATP-binding site is contributed by 49–54 (GIGKSG). Residues 68–69 (GT), H75, H81, 107–116 (LIIPRLEDKS), and 141–143 (SVE) contribute to the substrate site. Residue H75 coordinates Zn(2+). Residues 203–261 (MRQGDAIPQVMLATSVMDAMLELSRTGLGLVAVCDEQHVVKGVFTDGDLRRWLVGGGAL) enclose the CBS 1 domain. A substrate-binding site is contributed by E267. The CBS 2 domain maps to 269 to 321 (MTPNGITLQAQSRAIDAKELLMKRKITAAPVVDENGKLTGAINLQDFYQAGII).

This sequence belongs to the SIS family. GutQ/KpsF subfamily. Homotetramer.

It carries out the reaction D-arabinose 5-phosphate = D-ribulose 5-phosphate. Functionally, catalyzes the reversible aldol-ketol isomerization between D-ribulose 5-phosphate (Ru5P) and D-arabinose 5-phosphate (A5P). It is also able of sustaining the biosynthetic pathway of 3-deoxy-D-manno-octulosonate (KDO), a unique 8-carbon sugar component of lipopolysaccharides (LPSs). In Salmonella typhimurium (strain LT2 / SGSC1412 / ATCC 700720), this protein is Arabinose 5-phosphate isomerase GutQ (gutQ).